The primary structure comprises 362 residues: Ferrochelatase (362 aa).

The Fe cation site is built by His-212 and Glu-294.

The protein belongs to the ferrochelatase family.

It localises to the cytoplasm. The enzyme catalyses heme b + 2 H(+) = protoporphyrin IX + Fe(2+). It participates in porphyrin-containing compound metabolism; protoheme biosynthesis; protoheme from protoporphyrin-IX: step 1/1. Its function is as follows. Catalyzes the ferrous insertion into protoporphyrin IX. In Leptospira biflexa serovar Patoc (strain Patoc 1 / Ames), this protein is Ferrochelatase.